A 293-amino-acid polypeptide reads, in one-letter code: Protease HtpX homolog (293 aa).

The next 2 helical transmembrane spans lie at 7 to 26 (ASLLGLLSALLIGSSYALLG) and 30 to 49 (GMVMGIGLAALTNLGAWYYS). Histidine 131 is a Zn(2+) binding site. Glutamate 132 is an active-site residue. Position 135 (histidine 135) interacts with Zn(2+). 2 helical membrane-spanning segments follow: residues 148–168 (ATLAGAIAFLAQMVSYSFWFF) and 180–200 (IGALLMIVLAPLSATILQLGI). A Zn(2+)-binding site is contributed by glutamate 205.

The protein belongs to the peptidase M48B family. The cofactor is Zn(2+).

It is found in the cell inner membrane. The protein is Protease HtpX homolog of Acaryochloris marina (strain MBIC 11017).